We begin with the raw amino-acid sequence, 989 residues long: Voltage-gated delayed rectifier potassium channel KCNH1 (989 aa).

Residues 1 to 220 lie on the Cytoplasmic side of the membrane; it reads MTMAGGRRGL…LHYCVFKTTW (220 aa). The 81-residue stretch at 14–94 folds into the PAS domain; it reads QNTFLENIVR…QTFENYEMNS (81 aa). Residues 93 to 145 form the PAC domain; the sequence is NSFEILMYKKNRTPVWFFVKIAPIRNEQDKVVLFLCTFSDITAFKQPIEDDSC. The required for phosphatidylinositol bisphosphate binding stretch occupies residues 151–162; it reads FARLTRALTSSR. Residues 221–241 traverse the membrane as a helical segment; the sequence is DWIILILTFYTAILVPYNVSF. Topologically, residues 242–248 are extracellular; it reads KTRQNNV. Residues 249–269 traverse the membrane as a helical segment; it reads AWLVVDSIVDVIFLVDIVLNF. Residues 270-290 are Cytoplasmic-facing; the sequence is HTTFVGPAGEVISDPKLIRMN. A helical transmembrane segment spans residues 291 to 309; sequence YLKTWFVIDLLSCLPYDVI. Residues 310–345 lie on the Extracellular side of the membrane; that stretch reads NAFENVDEVSAFMGDPGKIGFADQIPPPLEGRESQG. The helical; Voltage-sensor transmembrane segment at 346–368 threads the bilayer; sequence ISSLFSSLKVVRLLRLGRVARKL. The Cytoplasmic segment spans residues 369–377; the sequence is DHYIEYGAA. A helical membrane pass occupies residues 378 to 399; the sequence is VLVLLVCVFGLAAHWMACIWYS. Topologically, residues 400–448 are extracellular; sequence IGDYEIFDEDTKTIRNNSWLYQLAMDIGTPYQFNGSGSGKWEGGPSKNS. N-linked (GlcNAc...) asparagine glycosylation is found at N415 and N433. The pore-forming intramembrane region spans 449–470; the sequence is VYISSLYFTMTSLTSVGFGNIA. Positions 463-468 match the Selectivity filter motif; it reads SVGFGN. Residues 471-477 lie on the Extracellular side of the membrane; sequence PSTDIEK. Residues 478–498 traverse the membrane as a helical segment; sequence IFAVAIMMIGSLLYATIFGNV. Over 499 to 989 the chain is Cytoplasmic; the sequence is TTIFQQMYAN…ESERDIFGAS (491 aa). Residues 673 to 770 are calmodulin-binding; sequence KRDALQKVLE…LDDLDVEKGN (98 aa). The interval 699–701 is interaction with cyclic nucleotide-binding pocket; the sequence is YNL. Positions 855 to 879 are enriched in basic and acidic residues; sequence KAESMETLPERTKASGEATLKKTDS. Disordered regions lie at residues 855-886 and 962-989; these read KAESMETLPERTKASGEATLKKTDSCDSGITK and RSSQSPQELFEISRPQSPESERDIFGAS. Residues 924-964 are CAD (involved in subunit assembly); it reads ATVLEVRHELKEDIKALNAKMTNIEKQLSEILRILTSRRSS. Phosphoserine is present on residues S974, S978, and S981. Residues 980 to 989 show a composition bias toward basic and acidic residues; the sequence is ESERDIFGAS.

Belongs to the potassium channel family. H (Eag) (TC 1.A.1.20) subfamily. Kv10.1/KCNH1 sub-subfamily. As to quaternary structure, homomultimer. The potassium channel is composed of a homo- or heterotetrameric complex of pore-forming alpha subunits that can associate with modulating beta subunits. Heteromultimer with KCNH5/EAG2. Interacts with ALG10B. Interacts with RABEP1. Interacts (via C-terminus) with CTTN. Interacts (via C-terminal cytoplasmic region) with Ca(2+)-bound calmodulin. Interacts with the spider kappa-theraphotoxin-Aa1a and mu/kappa-theraphotoxin-Ap1a. In terms of processing, channel activity is regulated via tyrosine phosphorylation/dephosphorylation by SRC and PTPN6. Highly expressed in brain and in myoblasts at the onset of fusion, but not in other tissues. Detected in HeLa (cervical carcinoma), SH-SY5Y (neuroblastoma) and MCF-7 (epithelial tumor) cells, but not in normal epithelial cells.

It is found in the cell membrane. The protein localises to the nucleus inner membrane. The protein resides in the cell projection. It localises to the dendrite. Its subcellular location is the axon. It is found in the presynaptic cell membrane. The protein localises to the perikaryon. The protein resides in the postsynaptic density membrane. It localises to the early endosome membrane. It carries out the reaction K(+)(in) = K(+)(out). Channel activity is inhibited by interaction with Ca(2+)-bound calmodulin. Interaction of a single pore-forming alpha subunit with a calmodulin chain is sufficient to promote channel closure. Channel activity is not regulated by cyclic nucleotides. Channel activity is inhibited by binding intracellular phosphatidylinositol-3,5-bisphosphate and phosphatidylinositol-4,5-bisphosphate (PIP2), but is not inhibited by phosphatidylinositol 4-phosphate. Inhibited by the spider kappa-theraphotoxin-Aa1a and mu/kappa-theraphotoxin-Ap1a. In terms of biological role, pore-forming (alpha) subunit of a voltage-gated delayed rectifier potassium channel that mediates outward-rectifying potassium currents which, on depolarization, reaches a steady-state level and do not inactivate. The activation kinetics depend on the prepulse potential and external divalent cation concentration. With negative prepulses, the current activation is delayed and slowed down several fold, whereas more positive prepulses speed up activation. The time course of activation is biphasic with a fast and a slowly activating current component. Activates at more positive membrane potentials and exhibit a steeper activation curve. Channel properties are modulated by subunit assembly. Mediates IK(NI) current in myoblasts. Involved in the regulation of cell proliferation and differentiation, in particular adipogenic and osteogenic differentiation in bone marrow-derived mesenchymal stem cells (MSCs). This chain is Voltage-gated delayed rectifier potassium channel KCNH1, found in Homo sapiens (Human).